A 397-amino-acid chain; its full sequence is MYVSNHRSRRVARVSVSCLVAALAAMSCGAALAADQVDPQLKFAMQRDLGIFPTQLPQYLQTEKLARTQAAAIEREFGAQFAGSWIERNEDGSFKLVAATSGARKSSTLGGVEVRNVRYSLKQLQSAMEQLDAGANARVKGVSKPLDGVQSWYVDPRSNAVVVKVDDGATEAGVDFVALSGADSAQVRIESSPGKLQTTANIVGGIEYSINNASLCSVGFSVTRGATKGFVTAGHCGTVNATARIGGAVVGTFAARVFPGNDRAWVSLTSAQTLLPRVANGSSFVTVRGSTEAAVGAAVCRSGRTTGYQCGTITAKNVTANYAEGAVRGLTQGNACMGRGDSGGSWITSAGQAQGVMSGGNVQSNGNNCGIPASQRSSLFERLQPILSQYGLSLVTG.

A signal peptide spans 1 to 24; sequence MYVSNHRSRRVARVSVSCLVAALA. Residues 25 to 199 constitute a propeptide that is removed on maturation; the sequence is AMSCGAALAA…ESSPGKLQTT (175 aa). Cys-216 and Cys-236 are oxidised to a cystine. Catalysis depends on charge relay system residues His-235 and Asp-262. Intrachain disulfides connect Cys-300-Cys-310 and Cys-336-Cys-369. Ser-342 (charge relay system) is an active-site residue.

Belongs to the peptidase S1 family.

It catalyses the reaction Preferential cleavage: Ala-|-Xaa, Val-|-Xaa in bacterial cell walls, elastin and other proteins.. This chain is Alpha-lytic protease (alpha-LP), found in Lysobacter enzymogenes.